The following is a 267-amino-acid chain: Large ribosomal subunit protein uL3 (267 aa).

A disordered region spans residues 124–147 (NQHIGPKSHGGGGGSQPVRQTGSL).

The protein belongs to the universal ribosomal protein uL3 family. Part of the 50S ribosomal subunit. Forms a cluster with proteins L14 and L19.

Functionally, one of the primary rRNA binding proteins, it binds directly near the 3'-end of the 23S rRNA, where it nucleates assembly of the 50S subunit. This is Large ribosomal subunit protein uL3 from Mycoplasmopsis agalactiae (strain NCTC 10123 / CIP 59.7 / PG2) (Mycoplasma agalactiae).